Consider the following 864-residue polypeptide: Protein translocase subunit SecA (864 aa).

ATP contacts are provided by residues Gln-87, Gly-105 to Thr-109, and Asp-494. Residues Ala-809–Ala-864 form a disordered region. Residues Lys-810–Pro-820 are compositionally biased toward basic and acidic residues. Cys-850, Cys-852, Cys-861, and Cys-862 together coordinate Zn(2+).

Belongs to the SecA family. In terms of assembly, monomer and homodimer. Part of the essential Sec protein translocation apparatus which comprises SecA, SecYEG and auxiliary proteins SecDF-YajC and YidC. Requires Zn(2+) as cofactor.

Its subcellular location is the cell inner membrane. The protein localises to the cytoplasm. It catalyses the reaction ATP + H2O + cellular proteinSide 1 = ADP + phosphate + cellular proteinSide 2.. Part of the Sec protein translocase complex. Interacts with the SecYEG preprotein conducting channel. Has a central role in coupling the hydrolysis of ATP to the transfer of proteins into and across the cell membrane, serving as an ATP-driven molecular motor driving the stepwise translocation of polypeptide chains across the membrane. This is Protein translocase subunit SecA from Oleidesulfovibrio alaskensis (strain ATCC BAA-1058 / DSM 17464 / G20) (Desulfovibrio alaskensis).